The following is a 132-amino-acid chain: Vacuolar protein sorting-associated protein 55 homolog (132 aa).

Helical transmembrane passes span 7-27 (VAAL…GCAL), 32-52 (TWTP…LLIA), 68-88 (LALF…IVLA), and 98-118 (CFLV…YFYL).

This sequence belongs to the OB-RGRP/VPS55 family.

Its subcellular location is the endosome membrane. Involved in endosomal protein transport. This Caenorhabditis elegans protein is Vacuolar protein sorting-associated protein 55 homolog.